We begin with the raw amino-acid sequence, 885 residues long: Chromatin structure-remodeling complex protein RSC3 (885 aa).

Residues 14-42 (CVQCRKRKIGCDRVKPICGNCMKHNKMDC) constitute a DNA-binding region (zn(2)-C6 fungal-type). Phosphoserine occurs at positions 95 and 236.

Forms a heteromer with RSC30. Interacts with LDB7 and NPL6. Component of the two forms of the RSC complex composed of at least either RSC1 or RSC2, and ARP7, ARP9, LDB7, NPL6, RSC3, RSC30, RSC4, RSC58, RSC6, RSC8, RSC9, SFH1, STH1, HTL1 and probably RTT102. The complexes interact with histone and histone variant components of centromeric chromatin. Component of a fungal-specific module (HTL1-LDB7-NPL6-RSC3-RSC30) within the RSC complex.

The protein resides in the nucleus. Its function is as follows. Component of the chromatin structure-remodeling complex (RSC), which is involved in transcription regulation and nucleosome positioning. RSC is responsible for the transfer of a histone octamer from a nucleosome core particle to naked DNA. The reaction requires ATP and involves an activated RSC-nucleosome intermediate. Remodeling reaction also involves DNA translocation, DNA twist and conformational change. As a reconfigurer of centromeric and flanking nucleosomes, RSC complex is required both for proper kinetochore function in chromosome segregation and, via a PKC1-dependent signaling pathway, for organization of the cellular cytoskeleton. This subunit is required for transcription of ribosomal protein genes and genes involved in the integrity of the cell wall, and also for proper metaphase progression. Together with HTL1, LDB7, NPL6, RSC30 components, defines a fungal-specific module within the RSC complex that plays a role in many cellular functions including the maintenance of cell wall integrity. In Saccharomyces cerevisiae (strain ATCC 204508 / S288c) (Baker's yeast), this protein is Chromatin structure-remodeling complex protein RSC3 (RSC3).